The primary structure comprises 279 residues: 1-(5-phosphoribosyl)-5-[(5-phosphoribosylamino)methylideneamino] imidazole-4-carboxamide isomerase (279 aa).

It belongs to the HisA/HisF family.

Its subcellular location is the cytoplasm. The catalysed reaction is 1-(5-phospho-beta-D-ribosyl)-5-[(5-phospho-beta-D-ribosylamino)methylideneamino]imidazole-4-carboxamide = 5-[(5-phospho-1-deoxy-D-ribulos-1-ylimino)methylamino]-1-(5-phospho-beta-D-ribosyl)imidazole-4-carboxamide. It functions in the pathway amino-acid biosynthesis; L-histidine biosynthesis; L-histidine from 5-phospho-alpha-D-ribose 1-diphosphate: step 4/9. The sequence is that of 1-(5-phosphoribosyl)-5-[(5-phosphoribosylamino)methylideneamino] imidazole-4-carboxamide isomerase (HIS6) from Candida albicans (Yeast).